A 95-amino-acid chain; its full sequence is Parvalbumin beta 3 (95 aa).

Ala-1 bears the N-acetylalanine mark. 2 consecutive EF-hand domains span residues 39-66 (FFAI…FSAG) and 77-95 (DVDG…LVKA). Residues Asp-44, Asp-46, Ser-48, Phe-50, Glu-52, Glu-55, Asp-77, Asp-79, Asp-81, Met-83, and Glu-88 each coordinate Ca(2+).

It belongs to the parvalbumin family.

In terms of biological role, in muscle, parvalbumin is thought to be involved in relaxation after contraction. It binds two calcium ions. The chain is Parvalbumin beta 3 from Merluccius paradoxus (Deep-water Cape hake).